The primary structure comprises 80 residues: ATP synthase subunit c (80 aa).

A run of 2 helical transmembrane segments spans residues 11–31 and 53–73; these read IAAA…IGIL and FFIV…LGLY.

It belongs to the ATPase C chain family. F-type ATPases have 2 components, F(1) - the catalytic core - and F(0) - the membrane proton channel. F(1) has five subunits: alpha(3), beta(3), gamma(1), delta(1), epsilon(1). F(0) has three main subunits: a(1), b(2) and c(10-14). The alpha and beta chains form an alternating ring which encloses part of the gamma chain. F(1) is attached to F(0) by a central stalk formed by the gamma and epsilon chains, while a peripheral stalk is formed by the delta and b chains.

It is found in the cell inner membrane. Functionally, f(1)F(0) ATP synthase produces ATP from ADP in the presence of a proton or sodium gradient. F-type ATPases consist of two structural domains, F(1) containing the extramembraneous catalytic core and F(0) containing the membrane proton channel, linked together by a central stalk and a peripheral stalk. During catalysis, ATP synthesis in the catalytic domain of F(1) is coupled via a rotary mechanism of the central stalk subunits to proton translocation. In terms of biological role, key component of the F(0) channel; it plays a direct role in translocation across the membrane. A homomeric c-ring of between 10-14 subunits forms the central stalk rotor element with the F(1) delta and epsilon subunits. The polypeptide is ATP synthase subunit c (Aeromonas hydrophila subsp. hydrophila (strain ATCC 7966 / DSM 30187 / BCRC 13018 / CCUG 14551 / JCM 1027 / KCTC 2358 / NCIMB 9240 / NCTC 8049)).